Reading from the N-terminus, the 508-residue chain is Adenylosuccinate synthetase 1, chloroplastic (508 aa).

The transit peptide at 1 to 56 (MNISILRLDSNPITTATSPATATANHRSGILGCYNGTYSCRLNQLQQRKKNPSIIV) directs the protein to the chloroplast. GTP-binding positions include 95 to 101 (GDEGKGK) and 123 to 125 (GHT). The Proton acceptor role is filled by Asp96. Asp96 and Gly123 together coordinate Mg(2+). IMP contacts are provided by residues 96 to 99 (DEGK), 121 to 124 (NAGH), Thr213, Arg227, Gln307, Thr322, and Arg386. The active-site Proton donor is the His124. Residue 382 to 388 (TTTGRPR) coordinates substrate. GTP-binding positions include Arg388, 414 to 416 (KLD), and 497 to 499 (GIG).

It belongs to the adenylosuccinate synthetase family. Homodimer. Mg(2+) serves as cofactor.

The protein localises to the plastid. It is found in the chloroplast. The enzyme catalyses IMP + L-aspartate + GTP = N(6)-(1,2-dicarboxyethyl)-AMP + GDP + phosphate + 2 H(+). It participates in purine metabolism; AMP biosynthesis via de novo pathway; AMP from IMP: step 1/2. Plays an important role in the de novo pathway and in the salvage pathway of purine nucleotide biosynthesis. Catalyzes the first committed step in the biosynthesis of AMP from IMP. The sequence is that of Adenylosuccinate synthetase 1, chloroplastic from Capsicum frutescens (Cayenne pepper).